A 232-amino-acid chain; its full sequence is Dephospho-CoA kinase (232 aa).

Residues 3 to 206 (IVGLTGGIAS…RPLTWIEFWR (204 aa)) enclose the DPCK domain. Position 8 to 15 (8 to 15 (GGIASGKS)) interacts with ATP.

Belongs to the CoaE family.

Its subcellular location is the peroxisome. The catalysed reaction is 3'-dephospho-CoA + ATP = ADP + CoA + H(+). It participates in cofactor biosynthesis; coenzyme A biosynthesis; CoA from (R)-pantothenate: step 5/5. In terms of biological role, catalyzes the phosphorylation of the 3'-hydroxyl group of dephosphocoenzyme A to form coenzyme A. The polypeptide is Dephospho-CoA kinase (Arabidopsis thaliana (Mouse-ear cress)).